Consider the following 492-residue polypeptide: MDAMKYHDLRDFLTLLEQQGELKRITLPVDPHLEITEIADRTLRAGGPALLFESPKGYAMPVLCNLFGTPKRVAMGMGQDDVSALREVGKLLAFLKEPEPPKGFRDLFDKLPQFKQVLNMPTKRLRGAPCQQKIASGDDVDLTRLPVMTCWPDDAAPLITWGLTVTRGPHKERQNLGIYRQQLIGKNKLIMRWLSHRGGALDFQEWLAARPGERFPVSVALGADPATILGAVTPVPDTLSEYAFAGLLRGTKTEVVKCLSNDLEVPASAEIILEGYIEPGEMAPEGPYGDHTGYYNEVDNFPVFTVTHITQREDAIYHSTYTGRPPDEPAVLGVALNEVFVPILQKQFPEIVDFYLPPEGCSYRLAVVTMKKQYAGHAKRVMMGVWSFLRQFMYTKFVIVCDDDVNARDWNDVIWAITTRMDPARDTVLVENTPIDYLDFASPVSGLGSKMGLDATNKWPGETQREWGRPIVKDPEVTARIDAIWDELAIFK.

Mn(2+) is bound at residue asparagine 175. Residues isoleucine 178–arginine 180, arginine 192–leucine 194, and arginine 197–glycine 198 each bind prenylated FMN. Glutamate 241 provides a ligand contact to Mn(2+). Catalysis depends on aspartate 290, which acts as the Proton donor.

This sequence belongs to the UbiD family. As to quaternary structure, homohexamer. The cofactor is prenylated FMN. Mn(2+) is required as a cofactor.

The protein resides in the cell membrane. The enzyme catalyses a 4-hydroxy-3-(all-trans-polyprenyl)benzoate + H(+) = a 2-(all-trans-polyprenyl)phenol + CO2. It participates in cofactor biosynthesis; ubiquinone biosynthesis. Functionally, catalyzes the decarboxylation of 3-octaprenyl-4-hydroxy benzoate to 2-octaprenylphenol, an intermediate step in ubiquinone biosynthesis. The sequence is that of 3-octaprenyl-4-hydroxybenzoate carboxy-lyase from Salmonella paratyphi A (strain ATCC 9150 / SARB42).